We begin with the raw amino-acid sequence, 416 residues long: S-adenosylmethionine synthase (416 aa).

His-14 lines the ATP pocket. A Mg(2+)-binding site is contributed by Asp-16. Glu-42 provides a ligand contact to K(+). Residues Glu-55 and Gln-98 each contribute to the L-methionine site. Positions 98-108 (QSADINQGVDR) are flexible loop. ATP contacts are provided by residues 164–166 (DAK), 240–241 (KF), Asp-249, 255–256 (RK), Ala-272, and Lys-276. Asp-249 is an L-methionine binding site. Lys-280 is a binding site for L-methionine.

It belongs to the AdoMet synthase family. As to quaternary structure, homotetramer; dimer of dimers. It depends on Mg(2+) as a cofactor. The cofactor is K(+).

It localises to the cytoplasm. The enzyme catalyses L-methionine + ATP + H2O = S-adenosyl-L-methionine + phosphate + diphosphate. The protein operates within amino-acid biosynthesis; S-adenosyl-L-methionine biosynthesis; S-adenosyl-L-methionine from L-methionine: step 1/1. In terms of biological role, catalyzes the formation of S-adenosylmethionine (AdoMet) from methionine and ATP. The overall synthetic reaction is composed of two sequential steps, AdoMet formation and the subsequent tripolyphosphate hydrolysis which occurs prior to release of AdoMet from the enzyme. This Flavobacterium psychrophilum (strain ATCC 49511 / DSM 21280 / CIP 103535 / JIP02/86) protein is S-adenosylmethionine synthase.